Consider the following 261-residue polypeptide: uncharacterized protein (261 aa).

The 236-residue stretch at 1–236 (MEIKEITIIG…SRKINEVDNW (236 aa)) folds into the ABC transporter domain. 36–43 (GPTGSGKS) is an ATP binding site.

Belongs to the ABC transporter superfamily.

This is an uncharacterized protein from Methanocaldococcus jannaschii (strain ATCC 43067 / DSM 2661 / JAL-1 / JCM 10045 / NBRC 100440) (Methanococcus jannaschii).